A 525-amino-acid polypeptide reads, in one-letter code: Cysteine--tRNA ligase (525 aa).

Position 49 (Cys-49) interacts with Zn(2+). A 'HIGH' region motif is present at residues 51 to 61 (VTVYDLCHLGH). Residues Cys-258, His-283, and Glu-287 each coordinate Zn(2+). Residues 315 to 319 (KMSKS) carry the 'KMSKS' region motif. Lys-318 lines the ATP pocket.

It belongs to the class-I aminoacyl-tRNA synthetase family. Monomer. The cofactor is Zn(2+).

The protein localises to the cytoplasm. The catalysed reaction is tRNA(Cys) + L-cysteine + ATP = L-cysteinyl-tRNA(Cys) + AMP + diphosphate. This chain is Cysteine--tRNA ligase, found in Synechococcus sp. (strain JA-2-3B'a(2-13)) (Cyanobacteria bacterium Yellowstone B-Prime).